Reading from the N-terminus, the 64-residue chain is UPF0434 protein TERTU_2813 (64 aa).

Belongs to the UPF0434 family.

The chain is UPF0434 protein TERTU_2813 from Teredinibacter turnerae (strain ATCC 39867 / T7901).